The chain runs to 1166 residues: Calcium-activated potassium channel subunit alpha-1 (1166 aa).

A compositionally biased stretch (gly residues) spans 1 to 15 (MANGGGGGGGGGGGS). Disordered stretches follow at residues 1-20 (MANG…LRMS) and 30-51 (LDAS…SVHE). Residues 1-74 (MANGGGGGGG…VPCDSRGQRM (74 aa)) are Extracellular-facing. Residues 33 to 48 (SSSSSSSSSSSSSSSS) are compositionally biased toward low complexity. A helical transmembrane segment spans residues 75-95 (WWAFLASSMVTFFGGLFIILL). Topologically, residues 96 to 166 (WRTLKYLWTV…MISAQTLTGR (71 aa)) are cytoplasmic. 3 S-palmitoyl cysteine lipidation sites follow: cysteine 106, cysteine 107, and cysteine 109. The residue at position 139 (threonine 139) is a Phosphothreonine; by CamK2. Residues 167 to 187 (VLVVLVFALSIGALVIYFIDS) form a helical membrane-spanning segment. Residues 188 to 202 (SNPIESCQNFYKDFT) are Extracellular-facing. A helical transmembrane segment spans residues 203–223 (LQIDMAFNVFFLLYFGLRFIA). Residues 224-227 (ANDK) lie on the Cytoplasmic side of the membrane. The helical transmembrane segment at 228-248 (LWFWLEVNSVVDFFTVPPVFV) threads the bilayer. Residues 249-252 (SVYL) are Extracellular-facing. The chain crosses the membrane as a helical; Voltage-sensor span at residues 253–273 (NRSWLGLRFLRALRLIQFSEI). Topologically, residues 274–288 (LQFLNILKTSNSIKL) are cytoplasmic. A helical transmembrane segment spans residues 289–309 (VNLLSIFISTWLTAAGFIHLV). The Extracellular portion of the chain corresponds to 310–323 (ENSGDPWENFQNNQ). An intramembrane region (pore-forming) is located at residues 324–346 (ALTYWECVYLLMVTMSTVGYGDV). Positions 340–343 (TVGY) match the Selectivity for potassium motif. At 347–355 (YAKTTLGRL) the chain is on the extracellular side. A helical transmembrane segment spans residues 356 to 376 (FMVFFILGGLAMFASYVPEII). Over 377–1166 (ELIGNRKKYG…KQKYVQEERL (790 aa)) the chain is Cytoplasmic. The region spanning 395-537 (RKHIVVCGHI…WNWKEGDDAI (143 aa)) is the RCK N-terminal 1 domain. Residues glutamate 427, glutamine 450, and glutamate 452 each contribute to the Mg(2+) site. Residues 544-564 (LGFIAQSCLAQGLSTMLANLF) are segment S7. The segment at 601-621 (LSFPTVCELCFVKLKLLMIAI) is segment S8. A heme-binding motif region spans residues 665 to 669 (CKACH). Residues 689-717 (EQPSTLSPKKKQRNGGMRNSPSSSPKLMR) are disordered. Threonine 693 is modified (phosphothreonine). A phosphoserine mark is found at serine 695, serine 708, and serine 712. Residues 767-787 (VLSGHVVVCIFGDVSSALIGL) form a segment S9 region. The RCK N-terminal 2 domain occupies 769-913 (SGHVVVCIFG…MDRSSPDNSP (145 aa)). Threonine 900 carries the post-translational modification Phosphothreonine. Phosphoserine is present on residues serine 908 and serine 912. Positions 933 to 955 (TELVNDTNVQFLDQDDDDDPDTE) match the Calcium bowl motif. 4 residues coordinate Ca(2+): glutamine 942, aspartate 945, aspartate 948, and aspartate 950. Positions 962 to 982 (FACGTAFAVSVLDSLMSATYF) are segment S10. A compositionally biased stretch (low complexity) spans 1116-1141 (RASLSHSSHSSQSSSKKSSSVHSIPS). The segment at 1116–1166 (RASLSHSSHSSQSSSKKSSSVHSIPSTANRQNRPKSRESRDKQKYVQEERL) is disordered. A compositionally biased stretch (basic and acidic residues) spans 1150–1166 (KSRESRDKQKYVQEERL). Serine 1151 and serine 1154 each carry phosphoserine; by PKG.

This sequence belongs to the potassium channel family. Calcium-activated (TC 1.A.1.3) subfamily. KCa1.1/KCNMA1 sub-subfamily. Homotetramer; which constitutes the calcium-activated potassium channel. Interacts with beta subunits KCNMB1, KCNMB2, KCNMB3 and KCNMB4. Interacts with gamma subunits LRRC26, LRRC38, LRRC52 and LRRC55. Beta and gamma subunits are accessory, and modulate its activity. Interacts with RAB11B. Post-translationally, phosphorylated. Stimulated by PKG, but not by PKA. In smooth muscles, phosphorylation affects its activity. In terms of processing, phosphorylated. Exclusively stimulated by PKA. In smooth muscles, phosphorylation affects its activity. Incremental phosphorylation of Thr-139 of the KCNMA1 tetramer changes the response to ethanol from increased activation to inhibition of channel activity. Post-translationally, palmitoylation by ZDHHC22 and ZDHHC23 within the intracellular linker between the S0 and S1 transmembrane domains regulates localization to the plasma membrane. Depalmitoylated by LYPLA1 and LYPLAL1, leading to retard exit from the trans-Golgi network.

Its subcellular location is the cell membrane. The enzyme catalyses K(+)(in) = K(+)(out). With respect to regulation, ethanol and carbon monoxide-bound heme increase channel activation. Heme inhibits channel activation. Phosphorylation of Thr-139 leads to inhibition of channel activity by ethanol. Functionally, potassium channel activated by both membrane depolarization or increase in cytosolic Ca(2+) that mediates export of K(+). It is also activated by concentration of cytosolic Mg(2+). Its activation dampens the excitatory events that elevate the cytosolic Ca(2+) concentration and/or depolarize the cell membrane. It therefore contributes to repolarization of the membrane potential. Plays a key role in controlling excitability in a number of systems, such as regulation of the contraction of smooth muscle, the tuning of hair cells in the cochlea, regulation of transmitter release, and innate immunity. In smooth muscles, its activation by high level of Ca(2+), caused by ryanodine receptors in the sarcoplasmic reticulum, regulates the membrane potential. In cochlea cells, its number and kinetic properties partly determine the characteristic frequency of each hair cell and thereby helps to establish a tonotopic map. Kinetics of KCNMA1 channels are determined by alternative splicing, phosphorylation status and its combination with modulating beta subunits. Highly sensitive to both iberiotoxin (IbTx) and charybdotoxin (CTX). In Bos taurus (Bovine), this protein is Calcium-activated potassium channel subunit alpha-1 (KCNMA1).